The sequence spans 216 residues: Probable nicotinate-nucleotide adenylyltransferase (216 aa).

The protein belongs to the NadD family.

It catalyses the reaction nicotinate beta-D-ribonucleotide + ATP + H(+) = deamido-NAD(+) + diphosphate. Its pathway is cofactor biosynthesis; NAD(+) biosynthesis; deamido-NAD(+) from nicotinate D-ribonucleotide: step 1/1. Its function is as follows. Catalyzes the reversible adenylation of nicotinate mononucleotide (NaMN) to nicotinic acid adenine dinucleotide (NaAD). This Geobacillus thermodenitrificans (strain NG80-2) protein is Probable nicotinate-nucleotide adenylyltransferase.